A 555-amino-acid chain; its full sequence is Perforin-1 (555 aa).

Residues 1-21 form the signal peptide; that stretch reads MAARLLLLGILLLLLPLPVPA. 3 cysteine pairs are disulfide-bonded: C23–C76, C31–C73, and C102–C176. Positions 27–375 constitute an MACPF domain; that stretch reads ARSECKRSHK…QYLTDRARWR (349 aa). A beta stranded membrane pass occupies residues 129 to 149; that stretch reads WKVGLDVTPKPTSNVHVSVAG. N205 is a glycosylation site (N-linked (GlcNAc...) asparagine). Cystine bridges form between C242/C408, C377/C393, C381/C395, and C397/C407. A beta stranded membrane pass occupies residues 257-279; that stretch reads CLTVEAQVNIGIHGSISAEAKAC. In terms of domain architecture, EGF-like spans 376–408; it reads DCSRPCPPGRQKSPRDPCQCVCHGSAVTTQDCC. One can recognise a C2 domain in the interval 397–519; sequence CHGSAVTTQD…CNLNHGHLKF (123 aa). Residues G429, D430, T433, A434, D436, D484, D486, D490, D491, and D492 each contribute to the Ca(2+) site. Cystine bridges form between C497–C510 and C525–C534. The N-linked (GlcNAc...) asparagine glycan is linked to N549.

This sequence belongs to the complement C6/C7/C8/C9 family. Monomer, as soluble protein. Homooligomer; homooligomerizes to form a pore-forming ring. Ca(2+) is required as a cofactor. N-glycosylated.

The protein localises to the cytolytic granule. It localises to the secreted. It is found in the cell membrane. The protein resides in the endosome lumen. Functionally, pore-forming protein that plays a key role in granzyme-mediated programmed cell death, and in defense against virus-infected or neoplastic cells. Plays an important role in killing other cells that are recognized as non-self by the immune system, e.g. in transplant rejection or some forms of autoimmune disease. Can insert into the membrane of target cells in its calcium-bound form, oligomerize and form large pores. Promotes cytolysis and apoptosis of target cells by mediating the passage and uptake of cytotoxic granzymes. Facilitates the delivery of cationic cargo protein, while anionic or neural proteins are not delivered efficiently. Perforin pores allow the release of mature caspase-7 (CASP7) into the extracellular milieu. The protein is Perforin-1 (PRF1) of Homo sapiens (Human).